Reading from the N-terminus, the 110-residue chain is Large ribosomal subunit protein uL22 (110 aa).

Belongs to the universal ribosomal protein uL22 family. In terms of assembly, part of the 50S ribosomal subunit.

Its function is as follows. This protein binds specifically to 23S rRNA; its binding is stimulated by other ribosomal proteins, e.g. L4, L17, and L20. It is important during the early stages of 50S assembly. It makes multiple contacts with different domains of the 23S rRNA in the assembled 50S subunit and ribosome. In terms of biological role, the globular domain of the protein is located near the polypeptide exit tunnel on the outside of the subunit, while an extended beta-hairpin is found that lines the wall of the exit tunnel in the center of the 70S ribosome. The polypeptide is Large ribosomal subunit protein uL22 (Pectobacterium atrosepticum (strain SCRI 1043 / ATCC BAA-672) (Erwinia carotovora subsp. atroseptica)).